The chain runs to 108 residues: Cell division topological specificity factor (108 aa).

It belongs to the MinE family.

Functionally, prevents the cell division inhibition by proteins MinC and MinD at internal division sites while permitting inhibition at polar sites. This ensures cell division at the proper site by restricting the formation of a division septum at the midpoint of the long axis of the cell. The sequence is that of Cell division topological specificity factor from Prochlorococcus marinus (strain AS9601).